The chain runs to 209 residues: Protein lin-28 homolog A (209 aa).

Positions Met1–Ala31 are disordered. Gly2 carries the N-acetylglycine modification. At Ser3 the chain carries Phosphoserine. The CSD domain occupies His39–Pro112. The interval Gly113 to Gly136 is flexible linker. Phosphoserine is present on Ser120. CCHC-type zinc fingers lie at residues Asp137–Leu154 and Lys159–Leu176. A disordered region spans residues Lys177 to Asn209. At Ser200 the chain carries Phosphoserine.

Belongs to the lin-28 family. Monomer. During skeletal muscle differentiation, associated with translation initiation complexes in the polysomal compartment. Directly interacts with EIF3S2. Interacts with NCL in an RNA-dependent manner. Interacts with TUT4 in the presence of pre-let-7 RNA. Expressed in embryonic stem cells (ES cells), spermatagonia and testis. Expressed in numerous epithelial tissues including the epithelia of the small intestine, the intralobular duct epithelium of the mammary gland and the epithelia of Henle's loop in the kidney and in the collecting duct (at protein level). Also expressed in the myocardium and skeletal muscle (at protein level).

The protein resides in the cytoplasm. It localises to the rough endoplasmic reticulum. The protein localises to the P-body. Its subcellular location is the stress granule. It is found in the nucleus. The protein resides in the nucleolus. Its function is as follows. RNA-binding protein that inhibits processing of pre-let-7 miRNAs and regulates translation of mRNAs that control developmental timing, pluripotency and metabolism. Seems to recognize a common structural G-quartet (G4) feature in its miRNA and mRNA targets. 'Translational enhancer' that drives specific mRNAs to polysomes and increases the efficiency of protein synthesis. Its association with the translational machinery and target mRNAs results in an increased number of initiation events per molecule of mRNA and, indirectly, in mRNA stabilization. Binds IGF2 mRNA, MYOD1 mRNA, ARBP/36B4 ribosomal protein mRNA and its own mRNA. Essential for skeletal muscle differentiation program through the translational up-regulation of IGF2 expression. Suppressor of microRNA (miRNA) biogenesis, including that of let-7, miR107, miR-143 and miR-200c. Specifically binds the miRNA precursors (pre-miRNAs), recognizing an 5'-GGAG-3' motif found in pre-miRNA terminal loop, and recruits TUT4 and TUT7 uridylyltransferaseS. This results in the terminal uridylation of target pre-miRNAs. Uridylated pre-miRNAs fail to be processed by Dicer and undergo degradation. The repression of let-7 expression is required for normal development and contributes to maintain the pluripotent state by preventing let-7-mediated differentiation of embryonic stem cells. Localized to the periendoplasmic reticulum area, binds to a large number of spliced mRNAs and inhibits the translation of mRNAs destined for the ER, reducing the synthesis of transmembrane proteins, ER or Golgi lumen proteins, and secretory proteins. Binds to and enhances the translation of mRNAs for several metabolic enzymes, such as PFKP, PDHA1 or SDHA, increasing glycolysis and oxidative phosphorylation. Which, with the let-7 repression may enhance tissue repair in adult tissue. The polypeptide is Protein lin-28 homolog A (Lin28a) (Mus musculus (Mouse)).